The chain runs to 129 residues: UPF0325 protein Spro_3794 (129 aa).

This sequence belongs to the UPF0325 family.

In Serratia proteamaculans (strain 568), this protein is UPF0325 protein Spro_3794.